The following is a 489-amino-acid chain: Glutamate--tRNA ligase (489 aa).

A 'HIGH' region motif is present at residues 12-22 (PSPTGIPHVGM). The 'KMSKS' region signature appears at 256 to 260 (KLSKR). Lys-259 serves as a coordination point for ATP.

Belongs to the class-I aminoacyl-tRNA synthetase family. Glutamate--tRNA ligase type 1 subfamily. As to quaternary structure, monomer.

Its subcellular location is the cytoplasm. It carries out the reaction tRNA(Glu) + L-glutamate + ATP = L-glutamyl-tRNA(Glu) + AMP + diphosphate. Its function is as follows. Catalyzes the attachment of glutamate to tRNA(Glu) in a two-step reaction: glutamate is first activated by ATP to form Glu-AMP and then transferred to the acceptor end of tRNA(Glu). This chain is Glutamate--tRNA ligase, found in Mycobacterium marinum (strain ATCC BAA-535 / M).